Here is a 3061-residue protein sequence, read N- to C-terminus: Genome polyprotein (3061 aa).

Positions 141-284 (KLTEGQMNHL…QGVMDSMVQF (144 aa)) constitute a Peptidase S30 domain. Active-site for P1 proteinase activity residues include histidine 192, aspartate 201, and serine 235. The Involved in interaction with stylet and aphid transmission motif lies at 334–337 (KITC). The short motif at 592-594 (PTK) is the Involved in virions binding and aphid transmission element. The region spanning 618–740 (LYIARQGFCY…ESDIKHYRVG (123 aa)) is the Peptidase C6 domain. Active-site for helper component proteinase activity residues include cysteine 626 and histidine 699. Residues 1229–1381 (DIAHSEHLDF…TQQPVKLIVE (153 aa)) enclose the Helicase ATP-binding domain. 1242 to 1249 (GAVGSGKS) contacts ATP. Residues 1331–1334 (DECH) carry the DECH box motif. In terms of domain architecture, Helicase C-terminal spans 1400–1559 (DVVQFGSNVL…NLPVMTGGVS (160 aa)). A Nuclear localization signal motif is present at residues 1884 to 1892 (RKKGKGKGT). O-(5'-phospho-RNA)-tyrosine is present on tyrosine 1907. The region spanning 2032–2250 (AKSLMRGLRD…VLWGPLKLKE (219 aa)) is the Peptidase C4 domain. Catalysis depends on for nuclear inclusion protein A activity residues histidine 2077, aspartate 2112, and cysteine 2182. The RdRp catalytic domain occupies 2517-2641 (WVYCDADGSQ…AVNPEKESIL (125 aa)). Residues 2795–2835 (GNDTIDAGGSTKKDAKQEQGSIQPNLNKEKEKDVNVGTSGT) are disordered. Phosphothreonine is present on threonine 3044.

The protein belongs to the potyviridae genome polyprotein family. As to quaternary structure, interacts with host eIF4E protein (via cap-binding region); this interaction mediates the translation of the VPg-viral RNA conjugates. Part of a complex that comprises VPg, RNA, host EIF4E and EIF4G; this interaction mediates the translation of the VPg-viral RNA conjugates. Post-translationally, VPg is uridylylated by the polymerase and is covalently attached to the 5'-end of the genomic RNA. This uridylylated form acts as a nucleotide-peptide primer for the polymerase. Potyviral RNA is expressed as two polyproteins which undergo post-translational proteolytic processing. Genome polyprotein is processed by NIa-pro, P1 and HC-pro proteinases resulting in the production of at least ten individual proteins. P3N-PIPO polyprotein is cleaved by P1 and HC-pro proteinases resulting in the production of three individual proteins. The P1 proteinase and the HC-pro cleave only their respective C-termini autocatalytically. 6K1 is essential for proper proteolytic separation of P3 from CI.

The protein resides in the host cytoplasmic vesicle. The protein localises to the host nucleus. It localises to the virion. It catalyses the reaction RNA(n) + a ribonucleoside 5'-triphosphate = RNA(n+1) + diphosphate. It carries out the reaction Hydrolyzes glutaminyl bonds, and activity is further restricted by preferences for the amino acids in P6 - P1' that vary with the species of potyvirus, e.g. Glu-Xaa-Xaa-Tyr-Xaa-Gln-|-(Ser or Gly) for the enzyme from tobacco etch virus. The natural substrate is the viral polyprotein, but other proteins and oligopeptides containing the appropriate consensus sequence are also cleaved.. The enzyme catalyses Hydrolyzes a Gly-|-Gly bond at its own C-terminus, commonly in the sequence -Tyr-Xaa-Val-Gly-|-Gly, in the processing of the potyviral polyprotein.. In terms of biological role, required for aphid transmission and also has proteolytic activity. Only cleaves a Gly-Gly dipeptide at its own C-terminus. Interacts with virions and aphid stylets. Acts as a suppressor of RNA-mediated gene silencing, also known as post-transcriptional gene silencing (PTGS), a mechanism of plant viral defense that limits the accumulation of viral RNAs. May have RNA-binding activity. Has helicase activity. It may be involved in replication. Its function is as follows. Indispensable for virus replication. Reduces the abundance of host transcripts related to jasmonic acid biosynthesis therefore altering the host defenses. In order to increase its own stability, decreases host protein degradation pathways. Functionally, indispensable for virus replication. In terms of biological role, mediates the cap-independent, EIF4E-dependent translation of viral genomic RNAs. Binds to the cap-binding site of host EIF4E and thus interferes with the host EIF4E-dependent mRNA export and translation. VPg-RNA directly binds EIF4E and is a template for transcription. Also forms trimeric complexes with EIF4E-EIF4G, which are templates for translation. Has RNA-binding and proteolytic activities. Its function is as follows. An RNA-dependent RNA polymerase that plays an essential role in the virus replication. Functionally, involved in aphid transmission, cell-to-cell and systemis movement, encapsidation of the viral RNA and in the regulation of viral RNA amplification. This Potato virus Y (strain Hungarian) (PVY) protein is Genome polyprotein.